A 294-amino-acid chain; its full sequence is Cytidine deaminase (294 aa).

CMP/dCMP-type deaminase domains lie at 48-168 and 186-294; these read DEDA…FGPK and LTGD…VLLG. Residue 89–91 coordinates substrate; the sequence is NME. Position 102 (His102) interacts with Zn(2+). Glu104 acts as the Proton donor in catalysis. The Zn(2+) site is built by Cys129 and Cys132.

The protein belongs to the cytidine and deoxycytidylate deaminase family. As to quaternary structure, homodimer. Requires Zn(2+) as cofactor.

It catalyses the reaction cytidine + H2O + H(+) = uridine + NH4(+). The enzyme catalyses 2'-deoxycytidine + H2O + H(+) = 2'-deoxyuridine + NH4(+). This enzyme scavenges exogenous and endogenous cytidine and 2'-deoxycytidine for UMP synthesis. The polypeptide is Cytidine deaminase (Escherichia fergusonii (strain ATCC 35469 / DSM 13698 / CCUG 18766 / IAM 14443 / JCM 21226 / LMG 7866 / NBRC 102419 / NCTC 12128 / CDC 0568-73)).